The sequence spans 342 residues: GTPase Obg (342 aa).

In terms of domain architecture, Obg spans 1-159 (MQFIDQAQIE…KLLRLELKLL (159 aa)). Residues 160–330 (AEVGIIGLPN…MLQEVWGILD (171 aa)) enclose the OBG-type G domain. Residues 166-173 (GLPNAGKS), 191-195 (FTTLI), 213-216 (DIPG), 280-283 (NKID), and 311-313 (SAV) each bind GTP. Residues S173 and T193 each coordinate Mg(2+).

Belongs to the TRAFAC class OBG-HflX-like GTPase superfamily. OBG GTPase family. As to quaternary structure, monomer. Requires Mg(2+) as cofactor.

Its subcellular location is the cytoplasm. Its function is as follows. An essential GTPase which binds GTP, GDP and possibly (p)ppGpp with moderate affinity, with high nucleotide exchange rates and a fairly low GTP hydrolysis rate. Plays a role in control of the cell cycle, stress response, ribosome biogenesis and in those bacteria that undergo differentiation, in morphogenesis control. This chain is GTPase Obg, found in Nostoc sp. (strain PCC 7120 / SAG 25.82 / UTEX 2576).